Reading from the N-terminus, the 195-residue chain is HTH-type transcriptional regulator BetI (195 aa).

Residues 8–68 (SIRRRQLIDA…ATMRDITSQL (61 aa)) enclose the HTH tetR-type domain. The segment at residues 31 to 50 (TIAQIARRAGVSTGIISHYF) is a DNA-binding region (H-T-H motif).

The protein operates within amine and polyamine biosynthesis; betaine biosynthesis via choline pathway [regulation]. Its function is as follows. Repressor involved in the biosynthesis of the osmoprotectant glycine betaine. It represses transcription of the choline transporter BetT and the genes of BetAB involved in the synthesis of glycine betaine. This Escherichia coli (strain SMS-3-5 / SECEC) protein is HTH-type transcriptional regulator BetI.